A 434-amino-acid chain; its full sequence is Arginine/serine-rich coiled-coil protein 2 (434 aa).

Residues 1–27 (MAASDTERDGLAPEKTSPDRDKKKEQS) show a composition bias toward basic and acidic residues. The segment at 1–230 (MAASDTERDG…PSPPPFRGRN (230 aa)) is disordered. Ala2 is subject to N-acetylalanine. Ser4 is modified (phosphoserine). A phosphothreonine mark is found at Thr6 and Thr16. Residues Ser17, Ser30, and Ser32 each carry the phosphoserine modification. Residues 35-51 (ASKHHYSRSRSRSRERK) show a composition bias toward basic residues. Basic and acidic residues predominate over residues 66-111 (RSKEGRRHESKDKSSKKHKSEEHNDKEHSSDKGRERLNSSENGEDR). Ser104 is subject to Phosphoserine. Over residues 112-214 (HKRKERKSSR…KRIEKPRRFS (103 aa)) the composition is skewed to basic residues. Residues 230-270 (NTAMDAQEALARRLERAKKLQEQREKEMVEKQKQQEIAAAA) are a coiled coil. Lys375 participates in a covalent cross-link: Glycyl lysine isopeptide (Lys-Gly) (interchain with G-Cter in SUMO1); alternate. Lys375 is covalently cross-linked (Glycyl lysine isopeptide (Lys-Gly) (interchain with G-Cter in SUMO2); alternate). Ser376 is subject to Phosphoserine.

Belongs to the RSRC2 family.

This chain is Arginine/serine-rich coiled-coil protein 2 (RSRC2), found in Homo sapiens (Human).